Reading from the N-terminus, the 313-residue chain is Formimidoylglutamase (313 aa).

The Mn(2+) site is built by His130, Asp155, His157, Asp159, Asp241, and Asp243.

Belongs to the arginase family. Mn(2+) is required as a cofactor.

The enzyme catalyses N-formimidoyl-L-glutamate + H2O = formamide + L-glutamate. The protein operates within amino-acid degradation; L-histidine degradation into L-glutamate; L-glutamate from N-formimidoyl-L-glutamate (hydrolase route): step 1/1. Catalyzes the conversion of N-formimidoyl-L-glutamate to L-glutamate and formamide. The sequence is that of Formimidoylglutamase from Salmonella newport (strain SL254).